The chain runs to 930 residues: MSKKLTTNEIRKLWLDFFKSKNHTEVESKSLIPKNDDSLLWINSGVATLKTFFSGKENPPSKRLTNSQRCLRTNDIENVGLTSRHHTFFEMLGNFSIGDYFRKEAIEFGAELVFKVFKLDPKKIYITVYEEDQESFDLWVKNGAIKSHILKCDKSRNFWEIGSGPCGPCTEIYYDRGEKYDFQKLGEKLFFEDIENDRYIEIWNIVFSEFNNDGKNNYTKLARQNIDTGAGLERLACILQDVPTNYDTDAFVNVRSVIEKYSNKKYDNNLYFESKKDSEKVFINKCFSVIIDHFKAVIFAISDGALPSNKDRGYILRKLLRRSFLYLNYLKVSFENSKEIINTIISNNETYYPYLKENLNNVINTIKLEYDLYCESINNSFKKLNELLNKKLLDASDLFNLVTTYGFPIEIVQSLQELLTQSKDAKNLKLAEDIINSINPSDKKISISKLKIEFDEFEKLFDEHRLIANANASVKGMENQNEELLNLPTLDSSFDYEIESVKNSKVLKIFDENWKPVEEIKNKDCWVILDKTCFFATTGGQEHDTGKINKFDVVDVIKSPQGYHLHKVVKGTFKIGEKVDGQINSFDRNIIRKQHSSEHLMHSALKRVVSPTIKQEGAFKSIEKITLDFSFNRKLTYKEILGVEKEVKRIIATKNPTQVLMKTLDEAKEMGAIGYFEQVYKKISGKLRVLYLCPESIEICGGTHVYNTGDIEDFMVTGLTSKGSGSWRIEAVSSNYLVDKFKNNVIKKAIDDFNNYFKKYKELNIKDDEVEKYKKTDINSIHYLELKEINEILKNKINTLVIRKEKENLSKESNEIKNKFTEVKESTKLFLLKDIDRKLLFNSLVLAINEAKSTVFLVINEVDGVIQYVLCSNESFAKNNNLDFNLYAKDLNAKLGGKGGGRSYLVQGTILKIDEKELNKILDTINAKLK.

4 residues coordinate Zn(2+): histidine 595, histidine 599, cysteine 700, and histidine 704.

The protein belongs to the class-II aminoacyl-tRNA synthetase family. Zn(2+) serves as cofactor.

Its subcellular location is the cytoplasm. The enzyme catalyses tRNA(Ala) + L-alanine + ATP = L-alanyl-tRNA(Ala) + AMP + diphosphate. Catalyzes the attachment of alanine to tRNA(Ala) in a two-step reaction: alanine is first activated by ATP to form Ala-AMP and then transferred to the acceptor end of tRNA(Ala). Also edits incorrectly charged Ser-tRNA(Ala) and Gly-tRNA(Ala) via its editing domain. The sequence is that of Alanine--tRNA ligase from Malacoplasma penetrans (strain HF-2) (Mycoplasma penetrans).